Consider the following 516-residue polypeptide: L-amino acid oxidase bordonein-L (516 aa).

The first 18 residues, Met1–Cys18, serve as a signal peptide directing secretion. A disulfide bridge links Cys28 with Cys189. FAD is bound by residues Met61 to Ala62, Glu81 to Ala82, Arg89, and Gly103 to Arg106. 2 residues coordinate substrate: Arg106 and His239. Val279 contacts FAD. A disulfide bridge connects residues Cys349 and Cys430. Asn379 is a glycosylation site (N-linked (GlcNAc...) asparagine). Tyr390 is a substrate binding site. Residues Glu475 and Gly482–Thr487 contribute to the FAD site. Residue Gly482–Trp483 participates in substrate binding.

In terms of assembly, homodimer; non-covalently linked. It depends on FAD as a cofactor. N-glycosylated. N-glycan probably consists of the disaccharide N-acetylglucosamine-fucose (HexNAc-Fuc). Expressed by the venom gland.

Its subcellular location is the secreted. The catalysed reaction is an L-alpha-amino acid + O2 + H2O = a 2-oxocarboxylate + H2O2 + NH4(+). It catalyses the reaction L-leucine + O2 + H2O = 4-methyl-2-oxopentanoate + H2O2 + NH4(+). The enzyme catalyses L-phenylalanine + O2 + H2O = 3-phenylpyruvate + H2O2 + NH4(+). It carries out the reaction L-tryptophan + O2 + H2O = indole-3-pyruvate + H2O2 + NH4(+). The catalysed reaction is L-methionine + O2 + H2O = 4-methylsulfanyl-2-oxobutanoate + H2O2 + NH4(+). It catalyses the reaction L-isoleucine + O2 + H2O = (S)-3-methyl-2-oxopentanoate + H2O2 + NH4(+). The enzyme catalyses L-arginine + O2 + H2O = 5-guanidino-2-oxopentanoate + H2O2 + NH4(+). It carries out the reaction L-histidine + O2 + H2O = 3-(imidazol-5-yl)pyruvate + H2O2 + NH4(+). Its function is as follows. Catalyzes an oxidative deamination of predominantly hydrophobic and aromatic L-amino acids, thus producing hydrogen peroxide that may contribute to the diverse toxic effects of this enzyme. Is highly active on L-Met, L-Leu, L-Trp, and L-Phe, moderately active on L-Ile, L-His, and L-Arg, and weakly or not active on L-Gln, L-Val, L-Asn, L-Ala, L-Lys, L-Ser, L-Thr, L-Pro, L-Asp, L-Gly, L-Tyr, L-Cys and L-Glu. This enzyme exhibits diverse biological activities, such as hemorrhage, hemolysis, edema, apoptosis of vascular endothelial cells or tumor cell lines, antibacterial and antiparasitic activities, as well as regulation of platelet aggregation. Its effect on platelets is controversial, since it either induces aggregation or inhibits agonist-induced aggregation. These different effects are probably due to different experimental conditions. In vitro, the enzyme exhibits cytotoxicity against fibroblast cell line and kills Leishmania amazonensis promastigotes, intensified by substrate addition. In Crotalus durissus terrificus (South American rattlesnake), this protein is L-amino acid oxidase bordonein-L.